Here is a 196-residue protein sequence, read N- to C-terminus: MLITLEGIDGSGKSTAHAALRERLTAEETTFTREPTDSWYGSAVERSIGDADADPLAELFLYTADHADHLSRVVRPALEAGEPVVSDRYSDSRYAYQGATLEGVIDEPMAYVKRVHEPFTRPPDATLYFDVPPTVGAERAGATNKFEAADYLESVRENYERLIEAEPERFHRIDATQSESAVVEAAVETVETLLSR.

7-14 (GIDGSGKS) lines the ATP pocket.

This sequence belongs to the thymidylate kinase family.

The catalysed reaction is dTMP + ATP = dTDP + ADP. The chain is Probable thymidylate kinase from Natronomonas pharaonis (strain ATCC 35678 / DSM 2160 / CIP 103997 / JCM 8858 / NBRC 14720 / NCIMB 2260 / Gabara) (Halobacterium pharaonis).